The chain runs to 409 residues: Nucleoprotein (409 aa).

Disordered regions lie at residues 1–32 (MASG…SSGN), 46–68 (IPPP…SQQH), 164–196 (RSGR…EDDL), and 238–258 (VDQV…DDKM). A compositionally biased stretch (low complexity) spans 15 to 31 (PVIKLGGPKPPKVGSSG). The segment at 29 to 160 (SSGNASWFQA…GNFRWDFIPL (132 aa)) is RNA-binding. A CoV N NTD domain is found at 31–156 (GNASWFQAIK…GGPDGNFRWD (126 aa)). A compositionally biased stretch (low complexity) spans 166–179 (GRSTAASSAASSRA). Composition is skewed to basic and acidic residues over residues 180-192 (PSRE…RSGS) and 247-258 (KGKEGNFGDDKM). 2 positions are modified to phosphoserine; by host: S190 and S192. The 117-residue stretch at 215–331 (TKAKADEMAH…QCVDGVGTRP (117 aa)) folds into the CoV N CTD domain. Residues 226 to 333 (RYCKRTIPPN…VDGVGTRPKD (108 aa)) are dimerization. C320 and C323 are joined by a disulfide. The disordered stretch occupies residues 326–409 (GVGTRPKDDE…GDAALGENEL (84 aa)). Basic residues predominate over residues 358-367 (QRPKKEKKPK). The segment covering 368–384 (KHDDEVDKALTSDEERN) has biased composition (basic and acidic residues). A Phosphothreonine; by host modification is found at T378. A Phosphoserine; by host modification is found at S379.

Belongs to the gammacoronavirus nucleocapsid protein family. Homooligomer. Both monomeric and oligomeric forms interact with RNA. Interacts with protein M. Interacts with NSP3; this interaction serves to tether the genome to the newly translated replicase-transcriptase complex at a very early stage of infection. Post-translationally, ADP-ribosylated. The ADP-ribosylation is retained in the virion during infection. In terms of processing, phosphorylated on serine and threonine residues.

It localises to the virion. The protein localises to the host endoplasmic reticulum-Golgi intermediate compartment. The protein resides in the host Golgi apparatus. In terms of biological role, packages the positive strand viral genome RNA into a helical ribonucleocapsid (RNP) and plays a fundamental role during virion assembly through its interactions with the viral genome and membrane protein M. Plays an important role in enhancing the efficiency of subgenomic viral RNA transcription as well as viral replication. The polypeptide is Nucleoprotein (Avian infectious bronchitis virus (strain M41) (IBV)).